The primary structure comprises 498 residues: ATP synthase subunit beta, chloroplastic (498 aa).

172–179 (GGAGVGKT) provides a ligand contact to ATP.

This sequence belongs to the ATPase alpha/beta chains family. F-type ATPases have 2 components, CF(1) - the catalytic core - and CF(0) - the membrane proton channel. CF(1) has five subunits: alpha(3), beta(3), gamma(1), delta(1), epsilon(1). CF(0) has four main subunits: a(1), b(1), b'(1) and c(9-12).

It localises to the plastid. Its subcellular location is the chloroplast thylakoid membrane. The enzyme catalyses ATP + H2O + 4 H(+)(in) = ADP + phosphate + 5 H(+)(out). Functionally, produces ATP from ADP in the presence of a proton gradient across the membrane. The catalytic sites are hosted primarily by the beta subunits. In Vitis vinifera (Grape), this protein is ATP synthase subunit beta, chloroplastic.